A 551-amino-acid polypeptide reads, in one-letter code: Scaffold protein OPG125 (551 aa).

It belongs to the orthopoxvirus protein OPG125 family. As to quaternary structure, homotrimer. Self-assembles to form a layer. Interacts with OPG158 (via N-terminus); this interaction is necessary for OPG125 association with membranes.

It localises to the membrane. Its function is as follows. Scaffold protein which forms a transitory spherical honeycomb lattice providing curvature and rigidity to the convex membrane of crescent and immature virions (IV). This association occurs concomitantly with viral membrane formation. Targeted by the drug rifampicin, which prevents the formation of this lattice, and hence virus morphogenesis. In the presence of rifampicin, irregularly shaped membranes that lack the honeycomb layer accumulate around areas of electron-dense viroplasm. This layer is lost from virions during maturation from IV to mature virion (MV), through the proteolysis of OPG158 N-terminus. The chain is Scaffold protein OPG125 (OPG125) from Vaccinia virus (strain Ankara) (VACV).